A 188-amino-acid polypeptide reads, in one-letter code: Chitin synthase 1 (188 aa).

Belongs to the chitin synthase family. Class I subfamily.

The protein resides in the cell membrane. It catalyses the reaction [(1-&gt;4)-N-acetyl-beta-D-glucosaminyl](n) + UDP-N-acetyl-alpha-D-glucosamine = [(1-&gt;4)-N-acetyl-beta-D-glucosaminyl](n+1) + UDP + H(+). Its function is as follows. Polymerizes chitin, a structural polymer of the cell wall and septum, by transferring the sugar moiety of UDP-GlcNAc to the non-reducing end of the growing chitin polymer. In Ajellomyces dermatitidis (Blastomyces dermatitidis), this protein is Chitin synthase 1 (CHS1).